A 232-amino-acid chain; its full sequence is MAAEVTETAQPVETAASTDNNREQREPRRGGRERNPNRDRGNRDADKSQFLERVVTINRVSKVVKGGRRFSFTALVVVGDGNGLVGVGYGKAREVPLAISKGVEEAKKNFFRVPRVANTIPHPVQGEAAAGVVLLRPAAAGTGVIAGGPVRAVLECAGIHDVLSKSLGSSNTINIVHATVEALQQLEEPRAVAARRGLDYDRVAPEKLLQIEARAAEAAAAAKKAGAEKVGA.

A disordered region spans residues 1 to 47 (MAAEVTETAQPVETAASTDNNREQREPRRGGRERNPNRDRGNRDADK). Polar residues predominate over residues 7-19 (ETAQPVETAASTD). Positions 20 to 47 (NNREQREPRRGGRERNPNRDRGNRDADK) are enriched in basic and acidic residues. The region spanning 50 to 113 (FLERVVTINR…EEAKKNFFRV (64 aa)) is the S5 DRBM domain.

The protein belongs to the universal ribosomal protein uS5 family. As to quaternary structure, part of the 30S ribosomal subunit. Contacts proteins S4 and S8.

Functionally, with S4 and S12 plays an important role in translational accuracy. Its function is as follows. Located at the back of the 30S subunit body where it stabilizes the conformation of the head with respect to the body. This chain is Small ribosomal subunit protein uS5, found in Leifsonia xyli subsp. xyli (strain CTCB07).